The primary structure comprises 316 residues: Aspartate carbamoyltransferase catalytic subunit (316 aa).

Residues R66 and T67 each coordinate carbamoyl phosphate. K94 contacts L-aspartate. Carbamoyl phosphate is bound by residues R116, H146, and Q149. R179 and R234 together coordinate L-aspartate. Carbamoyl phosphate contacts are provided by G275 and P276.

It belongs to the aspartate/ornithine carbamoyltransferase superfamily. ATCase family. As to quaternary structure, heterododecamer (2C3:3R2) of six catalytic PyrB chains organized as two trimers (C3), and six regulatory PyrI chains organized as three dimers (R2).

It catalyses the reaction carbamoyl phosphate + L-aspartate = N-carbamoyl-L-aspartate + phosphate + H(+). It functions in the pathway pyrimidine metabolism; UMP biosynthesis via de novo pathway; (S)-dihydroorotate from bicarbonate: step 2/3. Its function is as follows. Catalyzes the condensation of carbamoyl phosphate and aspartate to form carbamoyl aspartate and inorganic phosphate, the committed step in the de novo pyrimidine nucleotide biosynthesis pathway. This chain is Aspartate carbamoyltransferase catalytic subunit, found in Nitrosomonas eutropha (strain DSM 101675 / C91 / Nm57).